The chain runs to 211 residues: MNVFTSSVGSVEFDHPLLLENDLTSLSINCDDVHCSSRALCYIYDIHSSRHPSIDEHQFLRLLHGPDDAVTLGSFLKTLIWILSHDKNLPEEYRLPTIMMSSSYVKFFTEVKPRPPSTNCWTCRMSKDNLPFTVPSVKGFPPDAELYIVPISDHDGKPVKFDNRKTLYRSPSKKRHKYVISSDKPPLSARYVKYVDSSALESLPGSSPAVL.

This sequence belongs to the tenuiviruses p3 protein family. As to quaternary structure, homodimer.

Its subcellular location is the host cytoplasm. In terms of biological role, acts as a suppressor of RNA-mediated gene silencing, also known as post-transcriptional gene silencing (PTGS), presumably through the binding of dsRNA. This chain is Suppressor of RNA silencing p3, found in Avena sativa (Oat).